Here is an 81-residue protein sequence, read N- to C-terminus: Large ribosomal subunit protein bL31B (81 aa).

Belongs to the bacterial ribosomal protein bL31 family. Type B subfamily. In terms of assembly, part of the 50S ribosomal subunit.

The polypeptide is Large ribosomal subunit protein bL31B (Borrelia garinii subsp. bavariensis (strain ATCC BAA-2496 / DSM 23469 / PBi) (Borreliella bavariensis)).